The primary structure comprises 666 residues: tRNA 5-methylaminomethyl-2-thiouridine biosynthesis bifunctional protein MnmC (666 aa).

The segment at 1–245 (MKQYAIQPAN…KREMLCGVMA (245 aa)) is tRNA (mnm(5)s(2)U34)-methyltransferase. Positions 270 to 666 (IGGGIASALL…RKLLKGKAVK (397 aa)) are FAD-dependent cmnm(5)s(2)U34 oxidoreductase.

The protein in the N-terminal section; belongs to the methyltransferase superfamily. tRNA (mnm(5)s(2)U34)-methyltransferase family. This sequence in the C-terminal section; belongs to the DAO family. The cofactor is FAD.

The protein resides in the cytoplasm. The enzyme catalyses 5-aminomethyl-2-thiouridine(34) in tRNA + S-adenosyl-L-methionine = 5-methylaminomethyl-2-thiouridine(34) in tRNA + S-adenosyl-L-homocysteine + H(+). Its function is as follows. Catalyzes the last two steps in the biosynthesis of 5-methylaminomethyl-2-thiouridine (mnm(5)s(2)U) at the wobble position (U34) in tRNA. Catalyzes the FAD-dependent demodification of cmnm(5)s(2)U34 to nm(5)s(2)U34, followed by the transfer of a methyl group from S-adenosyl-L-methionine to nm(5)s(2)U34, to form mnm(5)s(2)U34. The chain is tRNA 5-methylaminomethyl-2-thiouridine biosynthesis bifunctional protein MnmC from Citrobacter koseri (strain ATCC BAA-895 / CDC 4225-83 / SGSC4696).